The sequence spans 179 residues: Large ribosomal subunit protein uL5 (179 aa).

This sequence belongs to the universal ribosomal protein uL5 family. Part of the 50S ribosomal subunit; part of the 5S rRNA/L5/L18/L25 subcomplex. Contacts the 5S rRNA and the P site tRNA. Forms a bridge to the 30S subunit in the 70S ribosome.

Its function is as follows. This is one of the proteins that bind and probably mediate the attachment of the 5S RNA into the large ribosomal subunit, where it forms part of the central protuberance. In the 70S ribosome it contacts protein S13 of the 30S subunit (bridge B1b), connecting the 2 subunits; this bridge is implicated in subunit movement. Contacts the P site tRNA; the 5S rRNA and some of its associated proteins might help stabilize positioning of ribosome-bound tRNAs. In Halalkalibacterium halodurans (strain ATCC BAA-125 / DSM 18197 / FERM 7344 / JCM 9153 / C-125) (Bacillus halodurans), this protein is Large ribosomal subunit protein uL5.